We begin with the raw amino-acid sequence, 357 residues long: Guanine nucleotide-binding protein alpha-2 subunit (357 aa).

A lipid anchor (N-myristoyl glycine) is attached at glycine 2. Cysteine 4 carries the S-palmitoyl cysteine lipid modification. One can recognise a G-alpha domain in the interval 30 to 356; the sequence is NEVKLLLLGA…TQCVMKAGLY (327 aa). The tract at residues 33–46 is G1 motif; sequence KLLLLGAGESGKST. Glutamate 41, serine 42, glycine 43, lysine 44, serine 45, and threonine 46 together coordinate GTP. Serine 45 contributes to the Mg(2+) binding site. Serine 113 carries the post-translational modification Phosphoserine. GTP contacts are provided by aspartate 154, leucine 179, threonine 185, glycine 207, asparagine 272, lysine 273, aspartate 275, and alanine 328. A G2 motif region spans residues 177–185; that stretch reads DILHTRVMT. Residue threonine 185 coordinates Mg(2+). The tract at residues 200–209 is G3 motif; the sequence is FRLVDVGGQR. The interval 268-275 is G4 motif; sequence ILFLNKSD. Positions 326–331 are G5 motif; the sequence is TCATDT.

It belongs to the G-alpha family. As to quaternary structure, g proteins are composed of 3 units; alpha, beta and gamma. The alpha chain contains the guanine nucleotide binding site. Interacts with the RAP guanine nucleotide exchange factor glfB. Mg(2+) is required as a cofactor. Post-translationally, ser-113 is transiently phosphorylated following stimulation with extracellular cAMP.

Guanine nucleotide-binding proteins (G proteins) are involved as modulators or transducers in various transmembrane signaling systems. G alpha-2 is required for the early aggregation process and most of the known cAMP receptor-mediated responses. Interacts with downstream effector gflB, a Rap guanine nucleotide exchange factor, to regulate the balance between Ras and Rap signaling at the leading edge of chemotaxing cells. This is Guanine nucleotide-binding protein alpha-2 subunit (gpaB) from Dictyostelium discoideum (Social amoeba).